The sequence spans 210 residues: Riboflavin kinase (210 aa).

The tract at residues 1–81 (MECRERRLAA…DLLRYFNIAS (81 aa)) is H-T-H motif-like. The riboflavin kinase stretch occupies residues 82–210 (IRLVGRVVSG…GDVVEVEVLL (129 aa)). 91 to 96 (GLGEGA) is a binding site for CDP. Mg(2+) contacts are provided by Thr120 and Asn122. FMN contacts are provided by Thr177 and Glu185. Residue 190-193 (VKLR) participates in CDP binding.

It belongs to the archaeal riboflavin kinase family. It depends on Mg(2+) as a cofactor.

The enzyme catalyses riboflavin + CTP = CDP + FMN + H(+). The protein operates within cofactor biosynthesis; FMN biosynthesis; FMN from riboflavin (CTP route): step 1/1. Its function is as follows. Catalyzes the CTP-dependent phosphorylation of riboflavin (vitamin B2) to form flavin mononucleotide (FMN). This Pyrobaculum arsenaticum (strain DSM 13514 / JCM 11321 / PZ6) protein is Riboflavin kinase (ribK).